Here is a 193-residue protein sequence, read N- to C-terminus: MLLLLLPLLLAAVLTRTQADPVPRATRLPVEAKDCHIAQFKSLSPKELQAFKKAKGAIEKRLLEKDMRCSSHLISRAWDLKQLQVQERPKALQAEVALTLKVWENINDSALTTILGQPLHTLSHIHSQLQTCTQLQATAEPKPPSRRLSRWLHRLQEAQSKETPGCLEDSVTSNLFQLLLRDLKCVASGDQCV.

Positions 1–19 (MLLLLLPLLLAAVLTRTQA) are cleaved as a signal peptide. Cystine bridges form between cysteine 35–cysteine 132, cysteine 69–cysteine 166, and cysteine 185–cysteine 192.

The protein belongs to the lambda interferon family.

The protein resides in the secreted. Cytokine with antiviral, antitumour and immunomodulatory activities. Plays a critical role in the antiviral host defense, predominantly in the epithelial tissues. Acts as a ligand for the heterodimeric class II cytokine receptor composed of IL10RB and IFNLR1, and receptor engagement leads to the activation of the JAK/STAT signaling pathway resulting in the expression of IFN-stimulated genes (ISG), which mediate the antiviral state. Has a restricted receptor distribution and therefore restricted targets: is primarily active in epithelial cells and this cell type-selective action is because of the epithelial cell-specific expression of its receptor IFNLR1. Seems not to be essential for early virus-activated host defense in vaginal infection, but plays an important role in Toll-like receptor (TLR)-induced antiviral defense. Plays a significant role in the antiviral immune defense in the intestinal epithelium. Exerts an immunomodulatory effect by up-regulating MHC class I antigen expression. The polypeptide is Interferon lambda-3 (Ifnl3) (Mus musculus (Mouse)).